A 76-amino-acid chain; its full sequence is U1-cyrtautoxin-As1d (76 aa).

Intrachain disulfides connect Cys-23/Cys-37, Cys-30/Cys-51, Cys-36/Cys-66, and Cys-69/Cys-76.

This sequence belongs to the neurotoxin 21 family. In terms of tissue distribution, expressed by the venom gland.

It is found in the secreted. Functionally, neurotoxin with probable ion channel impairing activity. In vivo, is both paralytic and lethal, when injected into lepidopteran larvae. In Apomastus schlingeri (Trap-door spider), this protein is U1-cyrtautoxin-As1d.